The primary structure comprises 600 residues: Elongation factor 4 (600 aa).

The 183-residue stretch at 6–188 folds into the tr-type G domain; it reads QFIRNFSIIA…QITKQIPSPK (183 aa). GTP-binding positions include 18–23 and 135–138; these read DHGKST and NKID.

The protein belongs to the TRAFAC class translation factor GTPase superfamily. Classic translation factor GTPase family. LepA subfamily.

It localises to the cell inner membrane. The catalysed reaction is GTP + H2O = GDP + phosphate + H(+). Functionally, required for accurate and efficient protein synthesis under certain stress conditions. May act as a fidelity factor of the translation reaction, by catalyzing a one-codon backward translocation of tRNAs on improperly translocated ribosomes. Back-translocation proceeds from a post-translocation (POST) complex to a pre-translocation (PRE) complex, thus giving elongation factor G a second chance to translocate the tRNAs correctly. Binds to ribosomes in a GTP-dependent manner. This chain is Elongation factor 4, found in Leptospira interrogans serogroup Icterohaemorrhagiae serovar copenhageni (strain Fiocruz L1-130).